Here is a 1403-residue protein sequence, read N- to C-terminus: DNA-directed RNA polymerase subunit beta' (1403 aa).

Residues Cys-70, Cys-72, Cys-85, and Cys-88 each coordinate Zn(2+). Mg(2+) is bound by residues Asp-461, Asp-463, and Asp-465. Cys-816, Cys-890, Cys-897, and Cys-900 together coordinate Zn(2+).

The protein belongs to the RNA polymerase beta' chain family. As to quaternary structure, the RNAP catalytic core consists of 2 alpha, 1 beta, 1 beta' and 1 omega subunit. When a sigma factor is associated with the core the holoenzyme is formed, which can initiate transcription. It depends on Mg(2+) as a cofactor. The cofactor is Zn(2+).

The enzyme catalyses RNA(n) + a ribonucleoside 5'-triphosphate = RNA(n+1) + diphosphate. Its function is as follows. DNA-dependent RNA polymerase catalyzes the transcription of DNA into RNA using the four ribonucleoside triphosphates as substrates. This Dechloromonas aromatica (strain RCB) protein is DNA-directed RNA polymerase subunit beta'.